Reading from the N-terminus, the 358-residue chain is 3-O-methylredipecamine 2-O-methyltransferase IpeOMT3 (358 aa).

Residues glycine 193, aspartate 216, aspartate 236, methionine 237, and lysine 250 each contribute to the S-adenosyl-L-methionine site. The Proton acceptor role is filled by histidine 254.

Belongs to the class I-like SAM-binding methyltransferase superfamily. Cation-independent O-methyltransferase family. As to expression, expressed in roots.

The protein localises to the cytoplasm. It is found in the cytosol. The catalysed reaction is (S)-reticuline + S-adenosyl-L-methionine = (S)-laudanine + S-adenosyl-L-homocysteine + H(+). It functions in the pathway alkaloid biosynthesis. Functionally, O-methyltransferase involved in the biosynthesis of ipecac and benzylisoquinoline monoterpenoid-isoquinoline alkaloids natural products, starting by the condensation of dopamine and secologanin, and including emetine and cephaeline, drugs used both as anti-protozoal (e.g. treatment of ameobiasis) and as emetic agents. Catalyzes 2-O-methylation of 3-O-methylredipecamine and, with less efficiency, the 7-O-methylation of (S)-coclaurine, (R,S)-N-methylcoclaurine, (R,S)-4'-O-methylcoclaurine, (R,S)-6-O-methyllaudanosoline, nororientaline, (S)-norreticuline and (S)-reticuline. The protein is 3-O-methylredipecamine 2-O-methyltransferase IpeOMT3 of Carapichea ipecacuanha (Ipecac).